Reading from the N-terminus, the 190-residue chain is Mediator of RNA polymerase II transcription subunit 28 (190 aa).

Residues 76–108 adopt a coiled-coil conformation; that stretch reads MLIKDENQDLSIEIQRKEALLQKHYNRLEEWKA.

It belongs to the Mediator complex subunit 28 family. As to quaternary structure, component of the Mediator complex.

It is found in the nucleus. Functionally, component of the Mediator complex, a coactivator involved in the regulated transcription of nearly all RNA polymerase II-dependent genes. Mediator functions as a bridge to convey information from gene-specific regulatory proteins to the basal RNA polymerase II transcription machinery. Mediator is recruited to promoters by direct interactions with regulatory proteins and serves as a scaffold for the assembly of a functional preinitiation complex with RNA polymerase II and the general transcription factors. This Drosophila pseudoobscura pseudoobscura (Fruit fly) protein is Mediator of RNA polymerase II transcription subunit 28 (MED28).